We begin with the raw amino-acid sequence, 87 residues long: CRISPR-associated endoribonuclease Cas2 (87 aa).

Asp8 contacts Mg(2+).

The protein belongs to the CRISPR-associated endoribonuclease Cas2 protein family. Homodimer, forms a heterotetramer with a Cas1 homodimer. The cofactor is Mg(2+).

CRISPR (clustered regularly interspaced short palindromic repeat), is an adaptive immune system that provides protection against mobile genetic elements (viruses, transposable elements and conjugative plasmids). CRISPR clusters contain sequences complementary to antecedent mobile elements and target invading nucleic acids. CRISPR clusters are transcribed and processed into CRISPR RNA (crRNA). Functions as a ssRNA-specific endoribonuclease. Involved in the integration of spacer DNA into the CRISPR cassette. The sequence is that of CRISPR-associated endoribonuclease Cas2 from Dictyoglomus turgidum (strain DSM 6724 / Z-1310).